A 180-amino-acid polypeptide reads, in one-letter code: Segregation and condensation protein B (180 aa).

It belongs to the ScpB family. In terms of assembly, homodimer. Homodimerization may be required to stabilize the binding of ScpA to the Smc head domains. Component of a cohesin-like complex composed of ScpA, ScpB and the Smc homodimer, in which ScpA and ScpB bind to the head domain of Smc. The presence of the three proteins is required for the association of the complex with DNA.

It is found in the cytoplasm. Functionally, participates in chromosomal partition during cell division. May act via the formation of a condensin-like complex containing Smc and ScpA that pull DNA away from mid-cell into both cell halves. The sequence is that of Segregation and condensation protein B from Staphylococcus epidermidis (strain ATCC 35984 / DSM 28319 / BCRC 17069 / CCUG 31568 / BM 3577 / RP62A).